Reading from the N-terminus, the 253-residue chain is Testis-expressed protein 47 (253 aa).

This is Testis-expressed protein 47 (Tex47) from Mus musculus (Mouse).